A 204-amino-acid polypeptide reads, in one-letter code: Methylthioribulose-1-phosphate dehydratase (204 aa).

2 residues coordinate Zn(2+): H94 and H96.

This sequence belongs to the aldolase class II family. MtnB subfamily. The cofactor is Zn(2+).

It carries out the reaction 5-(methylsulfanyl)-D-ribulose 1-phosphate = 5-methylsulfanyl-2,3-dioxopentyl phosphate + H2O. The protein operates within amino-acid biosynthesis; L-methionine biosynthesis via salvage pathway; L-methionine from S-methyl-5-thio-alpha-D-ribose 1-phosphate: step 2/6. In terms of biological role, catalyzes the dehydration of methylthioribulose-1-phosphate (MTRu-1-P) into 2,3-diketo-5-methylthiopentyl-1-phosphate (DK-MTP-1-P). This is Methylthioribulose-1-phosphate dehydratase from Pseudomonas syringae pv. syringae (strain B728a).